The following is a 745-amino-acid chain: Junction plakoglobin (745 aa).

Met-1 bears the N-acetylmethionine mark. O-linked (GlcNAc) threonine glycosylation is present at Thr-14. Phosphoserine is present on residues Ser-99 and Ser-125. ARM repeat units lie at residues 132 to 171 (NYQDDAELATRALPELTKLLNDEDPVVVTKAAMIVNQLSK), 172 to 215 (KEAS…LSHH), 216 to 255 (REGLLAIFKSGGIPALVRMLSSPVESVLFYAITTLHNLLL), 258 to 297 (EGAKMAVRLADGLQKMVPLLNKNNPKFLAITTDCLQLLAY), 298 to 341 (GNQE…LSVC), 342 to 381 (PSNKPAIVEAGGMQALGKHLTSNSPRLVQNCLWTLRNLSD), 383 to 420 (ATKQEGLESVLKILVNQLSVDDVNVLTCATGTLSNLTC), 423 to 464 (SKNK…HLTS), 470 to 510 (EMAQ…NLAL), 512 to 551 (PANHAPLQEASVIPRLVQLLVKAHQDAQRHVAAGTQQPYT), 574 to 613 (PMNRMEIFRLNTIPLFVQLLYSSVENIQRVAAGVLCELAQ), and 615 to 661 (KEAA…PDYR). Residues 132–297 (NYQDDAELAT…TTDCLQLLAY (166 aa)) are interaction with DSC1 and DSG1. At Ser-182 the chain carries Phosphoserine. Residues 574–661 (PMNRMEIFRL…ISEDKNPDYR (88 aa)) are interaction with DSC1. Residues Ser-665 and Ser-730 each carry the phosphoserine modification.

The protein belongs to the beta-catenin family. Homodimer. Component of an E-cadherin/catenin adhesion complex composed of at least E-cadherin/CDH1 and gamma-catenin/JUP, and possibly alpha-catenin/CTNNA1; the complex is located to adherens junctions. The stable association of CTNNA1 is controversial as CTNNA1 was shown not to bind to F-actin when assembled in the complex. Interacts with MUC1. Interacts with CAV1. Interacts with PTPRJ. Interacts with DSG1. Interacts with DSC1 and DSC2. Interacts with PKP2. Interacts with PKP3 (via N-terminus); the interaction is required for PKP3 localization to desmosome cell-cell junctions. Interacts with DSG4. Post-translationally, may be phosphorylated by FER.

It is found in the cell junction. It localises to the adherens junction. The protein localises to the desmosome. Its subcellular location is the cytoplasm. The protein resides in the cytoskeleton. It is found in the cell membrane. It localises to the nucleus. Common junctional plaque protein. The membrane-associated plaques are architectural elements in an important strategic position to influence the arrangement and function of both the cytoskeleton and the cells within the tissue. The presence of plakoglobin in both the desmosomes and in the intermediate junctions suggests that it plays a central role in the structure and function of submembranous plaques. Acts as a substrate for VE-PTP and is required by it to stimulate VE-cadherin function in endothelial cells. Can replace beta-catenin in E-cadherin/catenin adhesion complexes which are proposed to couple cadherins to the actin cytoskeleton. This chain is Junction plakoglobin, found in Sus scrofa (Pig).